A 105-amino-acid chain; its full sequence is Small ribosomal subunit protein eS10A (105 aa).

The protein belongs to the eukaryotic ribosomal protein eS10 family. In terms of assembly, component of the small ribosomal subunit (SSU). Mature yeast ribosomes consist of a small (40S) and a large (60S) subunit. The 40S small subunit contains 1 molecule of ribosomal RNA (18S rRNA) and 33 different proteins (encoded by 57 genes). The large 60S subunit contains 3 rRNA molecules (25S, 5.8S and 5S rRNA) and 46 different proteins (encoded by 81 genes). eS10 interacts with GCN1 (via middle region); this interaction is direct and promotes GCN2 kinase activity. The N-terminus is not modified.

Its subcellular location is the cytoplasm. In terms of biological role, component of the ribosome, a large ribonucleoprotein complex responsible for the synthesis of proteins in the cell. The small ribosomal subunit (SSU) binds messenger RNAs (mRNAs) and translates the encoded message by selecting cognate aminoacyl-transfer RNA (tRNA) molecules. The large subunit (LSU) contains the ribosomal catalytic site termed the peptidyl transferase center (PTC), which catalyzes the formation of peptide bonds, thereby polymerizing the amino acids delivered by tRNAs into a polypeptide chain. The nascent polypeptides leave the ribosome through a tunnel in the LSU and interact with protein factors that function in enzymatic processing, targeting, and the membrane insertion of nascent chains at the exit of the ribosomal tunnel. eS10 plays a role as a positive regulator of the GCN2 kinase activity by stimulating GCN1-mediated GCN2 activation. This chain is Small ribosomal subunit protein eS10A, found in Saccharomyces cerevisiae (strain ATCC 204508 / S288c) (Baker's yeast).